A 181-amino-acid polypeptide reads, in one-letter code: uncharacterized protein (181 aa).

One can recognise an N-acetyltransferase domain in the interval 1-159; the sequence is MTVHHFTFHI…KACWMMQSLT (159 aa).

It belongs to the acetyltransferase family.

This is an uncharacterized protein from Escherichia coli (strain K12).